Reading from the N-terminus, the 856-residue chain is Structure-specific endonuclease subunit SLX4 (856 aa).

Positions 1-19 (MDNAAIASQSNTPPSNGRS) are enriched in polar residues. Disordered stretches follow at residues 1–24 (MDNAAIASQSNTPPSNGRSSARFV), 39–61 (IEPSSPFSPPSPSTLLTSLSKSP), 88–121 (VDSPKRQDKSITGSKAKPASTMRHGQRTASHKMA), 139–201 (KTRK…TDNE), 296–326 (GIQTPTESRPATNDSQSISSKQQRVKVKKPQ), 362–392 (KKMGVTKRTSGTERANAARGKSDTLKNGNGP), 621–640 (SKSSKLEPKPNQRNHKSQGD), 653–688 (RSDSISFVNTRSPKKRLAKTSVKSQESKSFSLSNEG), and 715–742 (DSVGEALPLSPSHSSNGNGTLHHPQDCD). Residues 51 to 60 (STLLTSLSKS) show a composition bias toward low complexity. The segment covering 139–152 (KTRKKKAATAKRTR) has biased composition (basic residues). Positions 296 to 309 (GIQTPTESRPATND) are enriched in polar residues. The span at 673–686 (SVKSQESKSFSLSN) shows a compositional bias: polar residues.

Belongs to the SLX4 family. As to quaternary structure, forms a heterodimer with SLX1. Post-translationally, phosphorylated in response to DNA damage.

The protein localises to the nucleus. In terms of biological role, regulatory subunit of the SLX1-SLX4 structure-specific endonuclease that resolves DNA secondary structures generated during DNA repair and recombination. Has endonuclease activity towards branched DNA substrates, introducing single-strand cuts in duplex DNA close to junctions with ss-DNA. This chain is Structure-specific endonuclease subunit SLX4, found in Ajellomyces dermatitidis (strain ER-3 / ATCC MYA-2586) (Blastomyces dermatitidis).